A 195-amino-acid polypeptide reads, in one-letter code: Thioredoxin reductase-like selenoprotein T (195 aa).

The signal sequence occupies residues 1 to 19 (MRLLLLLLVAASAVVRSDA). Positions 46–49 (CVSU) form a cross-link, cysteinyl-selenocysteine (Cys-Sec). Sec49 is a non-standard amino acid (selenocysteine). A helical transmembrane segment spans residues 85–103 (IASFLSVFKLVLIGLIIVG).

Belongs to the SelWTH family. Selenoprotein T subfamily. Post-translationally, may contain a selenide-sulfide bond between Cys-46 and Sec-49. This bond is speculated to serve as redox-active pair.

It localises to the endoplasmic reticulum membrane. It catalyses the reaction [thioredoxin]-dithiol + NADP(+) = [thioredoxin]-disulfide + NADPH + H(+). Functionally, selenoprotein with thioredoxin reductase-like oxidoreductase activity. Protects dopaminergic neurons against oxidative stress and cell death. Involved in ADCYAP1/PACAP-induced calcium mobilization and neuroendocrine secretion. Plays a role in fibroblast anchorage and redox regulation. In gastric smooth muscle, modulates the contraction processes through the regulation of calcium release and MYLK activation. In pancreatic islets, involved in the control of glucose homeostasis, contributes to prolonged ADCYAP1/PACAP-induced insulin secretion. This is Thioredoxin reductase-like selenoprotein T from Bos taurus (Bovine).